The following is a 195-amino-acid chain: BH3-interacting domain death agonist (195 aa).

An N-acetylmethionine modification is found at Met1. Residues 58–69 show a composition bias toward polar residues; that stretch reads TDGSQASRSFNQ. The segment at 58–77 is disordered; sequence TDGSQASRSFNQGRIEPDSE. Ser78 carries the post-translational modification Phosphoserine. A BH3 motif is present at residues 87–100; sequence ARHLAQIGDEMDHN.

Forms heterodimers either with the pro-apoptotic protein BAX or the anti-apoptotic protein BCL2. Interacts with PLEKHN1. As to quaternary structure, interacts with ITCH. Interacts with MTCH2. In terms of processing, TNF-alpha induces caspase-mediated cleavage into a major p15 and minor p13 and p11 products. Cleaved by CASP6 into a major p15 and minor p13 products, leading to release of cytochrome c and subsequent nonalcoholic steatohepatitis. Post-translationally, ubiquitinated by ITCH; ubiquitination results in proteasome-dependent degradation.

Its subcellular location is the cytoplasm. The protein resides in the mitochondrion membrane. The protein localises to the mitochondrion outer membrane. Functionally, induces caspases and apoptosis. Counters the protective effect of BCL2. Its function is as follows. Induces caspase activation and apoptosis. Allows the release of cytochrome c. This Mus musculus (Mouse) protein is BH3-interacting domain death agonist (Bid).